The following is a 1225-amino-acid chain: Structural maintenance of chromosomes protein 1 (1225 aa).

Position 33 to 40 (33 to 40 (GPNGSGKS)) interacts with ATP. A coiled-coil region spans residues 173–489 (SGSIQYKKEY…SANNQEYDLN (317 aa)). An SMC hinge domain is found at 527-641 (PGVKGLVHDL…CNTLNIAKDL (115 aa)). Residues 679 to 1063 (KEEYQSLMSL…LKIKKKRKEL (385 aa)) adopt a coiled-coil conformation. The Nuclear localization signal motif lies at 1057–1061 (KKKRK).

The protein belongs to the SMC family. SMC1 subfamily. Cohesin complexes are composed of the SMC1 and SMC3 heterodimer attached via their SMC hinge domain, MCD1/SCC1 which link them, and IRR1/SCC3, which interacts with MCD1. The cohesin complex also interacts with SCC2, which is required for its association with chromosomes.

Its subcellular location is the nucleus. It is found in the chromosome. In terms of biological role, involved in chromosome cohesion during cell cycle and in DNA repair. Central component of cohesin complex. The cohesin complex is required for the cohesion of sister chromatids after DNA replication. The cohesin complex apparently forms a large proteinaceous ring within which sister chromatids can be trapped. At anaphase, the complex is cleaved and dissociates from chromatin, allowing sister chromatids to segregate. This Saccharomyces cerevisiae (strain ATCC 204508 / S288c) (Baker's yeast) protein is Structural maintenance of chromosomes protein 1 (SMC1).